A 265-amino-acid chain; its full sequence is Shikimate dehydrogenase (NADP(+)) (265 aa).

Shikimate is bound by residues 15 to 17 (SKS) and Thr62. Lys66 acts as the Proton acceptor in catalysis. The shikimate site is built by Asn87 and Asp102. NADP(+) contacts are provided by residues 127 to 131 (GAGGA), 151 to 156 (NRTVSR), and Met212. Residue Tyr214 participates in shikimate binding. Position 234 (Gly234) interacts with NADP(+).

Belongs to the shikimate dehydrogenase family. As to quaternary structure, homodimer.

The enzyme catalyses shikimate + NADP(+) = 3-dehydroshikimate + NADPH + H(+). Its pathway is metabolic intermediate biosynthesis; chorismate biosynthesis; chorismate from D-erythrose 4-phosphate and phosphoenolpyruvate: step 4/7. Involved in the biosynthesis of the chorismate, which leads to the biosynthesis of aromatic amino acids. Catalyzes the reversible NADPH linked reduction of 3-dehydroshikimate (DHSA) to yield shikimate (SA). This chain is Shikimate dehydrogenase (NADP(+)), found in Thiobacillus denitrificans (strain ATCC 25259 / T1).